The primary structure comprises 192 residues: MKIRNATFYKSVSAIDHLPKEQLPEIVFVGRSNVGKSTLLNSLTARKGLAKTSSTPGKTQLINYFVINESCYFVDLPGYGYAKVDKGKKYEWGKLLSHYVSTRDSITLVVLLIDSRHPDMESDHLMAEFLEHCGRPYGVVLTKYDKLKQQAKAAARLAVKSYSLKSKFIVNYSAISGQGKEELLEQLAIYTG.

An EngB-type G domain is found at 22–192; it reads QLPEIVFVGR…LLEQLAIYTG (171 aa). GTP is bound by residues 30-37, 57-61, 75-78, 142-145, and 172-174; these read GRSNVGKS, GKTQL, DLPG, TKYD, and YSA. Mg(2+) contacts are provided by S37 and T59.

Belongs to the TRAFAC class TrmE-Era-EngA-EngB-Septin-like GTPase superfamily. EngB GTPase family. It depends on Mg(2+) as a cofactor.

In terms of biological role, necessary for normal cell division and for the maintenance of normal septation. This Chlorobium phaeobacteroides (strain BS1) protein is Probable GTP-binding protein EngB.